The primary structure comprises 310 residues: tRNA dimethylallyltransferase (310 aa).

13-20 (GPTASGKT) lines the ATP pocket. Residue 15-20 (TASGKT) participates in substrate binding. 4 interaction with substrate tRNA regions span residues 38-41 (DSAL), 162-166 (QRLSR), 243-248 (RCVGYR), and 276-283 (KRQITWLR).

It belongs to the IPP transferase family. In terms of assembly, monomer. Requires Mg(2+) as cofactor.

The enzyme catalyses adenosine(37) in tRNA + dimethylallyl diphosphate = N(6)-dimethylallyladenosine(37) in tRNA + diphosphate. Catalyzes the transfer of a dimethylallyl group onto the adenine at position 37 in tRNAs that read codons beginning with uridine, leading to the formation of N6-(dimethylallyl)adenosine (i(6)A). The chain is tRNA dimethylallyltransferase from Aliivibrio fischeri (strain ATCC 700601 / ES114) (Vibrio fischeri).